The sequence spans 586 residues: MARGYGATVSLVLLGLGLALAVIVLAVVLSRHQAPCGPQAFAHAAVAADSKVCSDIGRAILQQQGSPVDATIAALVCTSVVNPQSMGLGGGVIFTIYNVTTGKVEVINARETVPASHAPSLLDQCAQALPLGTGAQWIGVPGELRGYAEAHRRHGRLPWAQLFQPTIALLRGGHVVAPVLSRFLHNSILRPSLQASTLRQLFFNGTEPLRPQDPLPWPALATTLETVATEGVEVFYTGRLGQMLVEDIAKEGSQLTLQDLAKFQPEVVDALEVPLGDYTLYSPPPPAGGAILSFILNVLRGFNFSTESMARPEGRVNVYHHLVETLKFAKGQRWRLGDPRSHPKLQNASRDLLGETLAQLIRQQIDGRGDHQLSHYSLAEAWGHGTGTSHVSVLGEDGSAVAATSTINTPFGAMVYSPRTGIILNNELLDLCERCPRGSGTTPSPVSGDRVGGAPGRCWPPVPGERSPSSMVPSILINKAQGSKLVIGGAGGELIISAVAQAIMSKLWLGFDLRAAIAAPILHVNSKGCVEYEPNFSQEVQRGLQDRGQNQTQRPFFLNVVQAVSQEGACVYAVSDLRKSGEAAGY.

Topologically, residues 1–8 (MARGYGAT) are cytoplasmic. A helical; Signal-anchor for type II membrane protein transmembrane segment spans residues 9-29 (VSLVLLGLGLALAVIVLAVVL). Over 30-586 (SRHQAPCGPQ…LRKSGEAAGY (557 aa)) the chain is Extracellular. N98 is a glycosylation site (N-linked (GlcNAc...) asparagine). R110 serves as a coordination point for L-glutamate. Residues N204, N303, and N347 are each glycosylated (N-linked (GlcNAc...) asparagine). Residue T388 is the Nucleophile of the active site. Residues T406, E427, and 469-470 (SS) each bind L-glutamate. 2 N-linked (GlcNAc...) asparagine glycosylation sites follow: N535 and N550.

It belongs to the gamma-glutamyltransferase family. As to quaternary structure, heterodimer composed of the light and heavy chains. The active site is located in the light chain. Cleaved by autocatalysis into a large and a small subunit. Post-translationally, glycosylated. Expressed in follicular dendritic cells in lymphoid follicles (at protein level).

Its subcellular location is the membrane. It catalyses the reaction glutathione + H2O = L-cysteinylglycine + L-glutamate. The catalysed reaction is an S-substituted glutathione + H2O = an S-substituted L-cysteinylglycine + L-glutamate. The enzyme catalyses leukotriene C4 + H2O = leukotriene D4 + L-glutamate. It carries out the reaction S-[(2E,6E,10E)-geranylgeranyl]-L-glutathione + H2O = S-[(2E,6E,10E)-geranylgeranyl]-L-cysteinylglycine + L-glutamate. It catalyses the reaction an N-terminal (5-L-glutamyl)-[peptide] + an alpha-amino acid = 5-L-glutamyl amino acid + an N-terminal L-alpha-aminoacyl-[peptide]. It functions in the pathway sulfur metabolism; glutathione metabolism. Its pathway is lipid metabolism; leukotriene D4 biosynthesis. Its activity is regulated as follows. Inhibited by serine-borate. Cleaves the gamma-glutamyl bond of extracellular glutathione tripeptide (gamma-Glu-Cys-Gly) and certain glutathione conjugates. Hydrolyzes glutathione releasing L-Glu and Cys-Gly dipeptide which is further metabolized to maintain extracellular cysteine levels but also to provide cysteine necessary for intracellular glutathione synthesis. Among glutathione-S-conjugates metabolizes leukotriene C4 (LTC4) and S-geranylgeranyl-glutathione (GGG), but is inactive toward gamma-glutamyl leucine. Converts extracellular LTC4 to LTD4 during acute inflammatory response. Acts as a negative regulator of GGG bioactivity. GGT5 (via GGG catabolism) and ABCC1 (via extracellular transport) establish GGG gradients within lymphoid tissues to position P2RY8-positive lymphocytes at germinal centers in lymphoid follicles and restrict their chemotactic transmigration from blood vessels to bone marrow parenchyma. The transpeptidation reaction, i.e. the transfer of gamma-glutamyl moiety to an acceptor molecule to yield a new gamma-glutamyl compound requires high concentration of dipeptide acceptor and is considered nonphysiological. The polypeptide is Glutathione hydrolase 5 proenzyme (GGT5) (Homo sapiens (Human)).